A 229-amino-acid polypeptide reads, in one-letter code: Large ribosomal subunit protein uL1 (229 aa).

It belongs to the universal ribosomal protein uL1 family. In terms of assembly, part of the 50S ribosomal subunit.

Its function is as follows. Binds directly to 23S rRNA. The L1 stalk is quite mobile in the ribosome, and is involved in E site tRNA release. Protein L1 is also a translational repressor protein, it controls the translation of the L11 operon by binding to its mRNA. This Histophilus somni (strain 2336) (Haemophilus somnus) protein is Large ribosomal subunit protein uL1.